The sequence spans 620 residues: 1-deoxy-D-xylulose-5-phosphate synthase (620 aa).

Thiamine diphosphate contacts are provided by residues H80 and 121-123 (GHS). D152 is a binding site for Mg(2+). Residues 153-154 (GA), N181, Y288, and E370 each bind thiamine diphosphate. N181 contacts Mg(2+).

Belongs to the transketolase family. DXPS subfamily. Homodimer. Mg(2+) is required as a cofactor. It depends on thiamine diphosphate as a cofactor.

The catalysed reaction is D-glyceraldehyde 3-phosphate + pyruvate + H(+) = 1-deoxy-D-xylulose 5-phosphate + CO2. The protein operates within metabolic intermediate biosynthesis; 1-deoxy-D-xylulose 5-phosphate biosynthesis; 1-deoxy-D-xylulose 5-phosphate from D-glyceraldehyde 3-phosphate and pyruvate: step 1/1. Catalyzes the acyloin condensation reaction between C atoms 2 and 3 of pyruvate and glyceraldehyde 3-phosphate to yield 1-deoxy-D-xylulose-5-phosphate (DXP). The sequence is that of 1-deoxy-D-xylulose-5-phosphate synthase from Shigella sonnei (strain Ss046).